Reading from the N-terminus, the 570-residue chain is MASVAATTTLAPALAPRRARPGTGLVPPRRASAVAARSTVTSPTWRQRSQRLFPPEPEHYRGPKLKVAIIGAGLAGMSTAVELLDQGHEVDLYESRPFIGGKVGSFVDRQGNHIEMGLHVFFGCYSNLFRLMKKVGADNNLLVKEHTHTFVNKGGTIGELDFRFPVGAPLHGIQAFLRTNQLKVYDKARNAVALALSPVVRALVDPDGALQQVRDLDDISFSDWFMSKGGTRESITRMWDPVRYALGFIDCDNISARCMLTIFTLFATKTEASLLRMLKGSPDVYLSGPIKKYITDRGGRFHLRWGCREVLYEKSPDGETYVKGLLLTKATSREIIKADAYVAACDVPGIKRLLPSEWREWEMFDNIYKLDGVPVVTVQLRYNGWVTELQDLEKSRQLQRAVGLDNLLYTADADFSCFSDLALSSPADYYIEGQGSLIQAVLTPGDPYMPLPNEEIISKVQKQVVELFPSSRGLEVTWSSVVKIGQSLYREAPGNDPFRPDQKTPVKNFFLSGSYTKQDYIDSMEGATLSGRRTSAYICGAGEELLALRKKLLIDDGEKALGNVQVLQAS.

The segment covering Met1–Pro16 has biased composition (low complexity). A disordered region spans residues Met1–Ala33.

This sequence belongs to the zeta carotene desaturase family. Requires NAD(+) as cofactor. The cofactor is NADP(+). It depends on FAD as a cofactor.

The protein resides in the plastid. The protein localises to the chloroplast. It is found in the chromoplast. The enzyme catalyses 9,9'-di-cis-zeta-carotene + 2 a quinone = 7,7',9,9'-tetra-cis-lycopene + 2 a quinol. The protein operates within carotenoid biosynthesis; lycopene biosynthesis. Functionally, catalyzes the conversion of zeta-carotene to lycopene via the intermediary of neurosporene. It carries out two consecutive desaturations (introduction of double bonds) at positions C-7 and C-7'. The protein is Zeta-carotene desaturase, chloroplastic/chromoplastic (ZDS1) of Zea mays (Maize).